A 359-amino-acid polypeptide reads, in one-letter code: Acyl-CoA desaturase 3 (359 aa).

Residues 1–34 form a disordered region; that stretch reads MPGHLLQEEMTPSYTTTTTITAPPSGSLQNGREK. Over 1–72 the chain is Cytoplasmic; sequence MPGHLLQEEM…EGPPPKLEYV (72 aa). Over residues 11 to 27 the composition is skewed to low complexity; that stretch reads TPSYTTTTTITAPPSGS. A helical membrane pass occupies residues 73–93; the sequence is WRNIILMALLHVGALYGITLV. Asn-75 is a substrate binding site. Residues 94–97 lie on the Lumenal side of the membrane; the sequence is PSCK. Residues 98 to 118 traverse the membrane as a helical segment; it reads LYTCLFAFVYYVISIEGIGAG. Topologically, residues 119–217 are cytoplasmic; sequence VHRLWSHRTY…EKLVMFQRRY (99 aa). Residues His-120 and His-125 each coordinate Fe cation. Residues 120 to 125 carry the Histidine box-1 motif; the sequence is HRLWSH. The substrate site is built by Asn-148, Arg-155, and Asp-156. The Fe cation site is built by His-157, His-160, and His-161. The short motif at 157–161 is the Histidine box-2 element; it reads HRAHH. The substrate site is built by Arg-188 and Lys-189. Ser-203 carries the post-translational modification Phosphoserine. A helical transmembrane segment spans residues 218-237; the sequence is YKPGILLMCFILPTLVPWYC. The Lumenal portion of the chain corresponds to 238–241; the sequence is WGET. Residues 242–263 traverse the membrane as a helical segment; it reads FLNSFYVATLLRYAVVLNATWL. Trp-262 contacts substrate. The Cytoplasmic portion of the chain corresponds to 264-359; the sequence is VNSAAHLYGY…RTGDGSHKSG (96 aa). Residues His-269, His-298, His-301, and His-302 each coordinate Fe cation. Positions 298–302 match the Histidine box-3 motif; sequence HNYHH.

Belongs to the fatty acid desaturase type 1 family. Requires Fe(2+) as cofactor. In terms of tissue distribution, detected in skin, but at lower levels compared to Scd1. Detected in the middlle part of the sebaceous gland, but not in hair follicle. Not detected in liver and brain.

The protein localises to the endoplasmic reticulum membrane. It localises to the microsome membrane. The catalysed reaction is hexadecanoyl-CoA + 2 Fe(II)-[cytochrome b5] + O2 + 2 H(+) = (9Z)-hexadecenoyl-CoA + 2 Fe(III)-[cytochrome b5] + 2 H2O. In terms of biological role, stearoyl-CoA desaturase that utilizes O(2) and electrons from reduced cytochrome b5 to introduce the first double bond into saturated fatty acyl-CoA substrates. Catalyzes the insertion of a cis double bond at the delta-9 position into fatty acyl-CoA substrates including palmitoyl-CoA. Has a strong preference for saturated fatty acids with chain lengths of 14 or 16 carbon atoms (C14:0 and C16:0), and has only very low activity with stearatate (C18:0). Required for the biosynthesis of membrane phospholipids, cholesterol esters and triglycerides. This chain is Acyl-CoA desaturase 3, found in Mus musculus (Mouse).